Here is a 518-residue protein sequence, read N- to C-terminus: MFS-type transporter cnsO (518 aa).

Polar residues predominate over residues 1 to 13 (MESTDSSPPLSMT). The interval 1 to 24 (MESTDSSPPLSMTDTEKKGDAVTT) is disordered. The next 9 helical transmembrane spans lie at 99 to 119 (LALM…NIML), 122 to 142 (VGPK…TTLT), 156 to 176 (LMLG…LSMW), 187 to 207 (AIFY…AYGV), 221 to 241 (WLFL…LFCL), 298 to 318 (FMMM…SYTL), 334 to 354 (VMTT…GYIS), 362 to 382 (LCIM…WITV), and 392 to 412 (YFAI…VGAW). The N-linked (GlcNAc...) asparagine glycan is linked to Asn416. 2 helical membrane passes run 427–447 (IGLL…NIYI) and 455–475 (PLGF…PATI).

The protein belongs to the major facilitator superfamily.

The protein localises to the cell membrane. In terms of biological role, MFS-type transporter; part of the gene cluster that mediates the biosynthesis of communesins, a prominent class of indole alkaloids with great potential as pharmaceuticals. With the MFS transporter cnsL, is most likely responsible for cummunesins secretion and thereby may contribute to intrinsic resistance. The chain is MFS-type transporter cnsO from Penicillium expansum (Blue mold rot fungus).